Consider the following 136-residue polypeptide: NADPH-dependent 7-cyano-7-deazaguanine reductase (136 aa).

Catalysis depends on Cys-50, which acts as the Thioimide intermediate. Asp-57 serves as the catalytic Proton donor. Substrate contacts are provided by residues 72 to 74 (YEL) and 91 to 92 (HE).

This sequence belongs to the GTP cyclohydrolase I family. QueF type 1 subfamily.

Its subcellular location is the cytoplasm. It catalyses the reaction 7-aminomethyl-7-carbaguanine + 2 NADP(+) = 7-cyano-7-deazaguanine + 2 NADPH + 3 H(+). Its pathway is tRNA modification; tRNA-queuosine biosynthesis. In terms of biological role, catalyzes the NADPH-dependent reduction of 7-cyano-7-deazaguanine (preQ0) to 7-aminomethyl-7-deazaguanine (preQ1). The polypeptide is NADPH-dependent 7-cyano-7-deazaguanine reductase (Prochlorococcus marinus (strain MIT 9515)).